The primary structure comprises 327 residues: GTPase Obg (327 aa).

One can recognise an Obg domain in the interval 1–159; that stretch reads MQFIDQANII…WEVQLELKLL (159 aa). Residues 160-327 form the OBG-type G domain; the sequence is AEVGIIGLPN…SLLSEVWNRI (168 aa). ATP is bound by residues 166–173, 191–195, 213–216, 280–283, and 309–311; these read GLPNAGKS, FTTLI, DIPG, NKKE, and SSA. Ser173 and Thr193 together coordinate Mg(2+).

The protein belongs to the TRAFAC class OBG-HflX-like GTPase superfamily. OBG GTPase family. In terms of assembly, monomer. Mg(2+) is required as a cofactor.

It is found in the cytoplasm. Functionally, an essential GTPase which binds GTP, GDP and possibly (p)ppGpp with moderate affinity, with high nucleotide exchange rates and a fairly low GTP hydrolysis rate. Plays a role in control of the cell cycle, stress response, ribosome biogenesis and in those bacteria that undergo differentiation, in morphogenesis control. The polypeptide is GTPase Obg (Prochlorococcus marinus (strain MIT 9515)).